A 243-amino-acid polypeptide reads, in one-letter code: Biosynthetic peptidoglycan transglycosylase (243 aa).

Residues 21–43 form a helical membrane-spanning segment; the sequence is LLIVSLVSALMSVLQVIVFRFVD.

This sequence belongs to the glycosyltransferase 51 family.

The protein localises to the cell inner membrane. The enzyme catalyses [GlcNAc-(1-&gt;4)-Mur2Ac(oyl-L-Ala-gamma-D-Glu-L-Lys-D-Ala-D-Ala)](n)-di-trans,octa-cis-undecaprenyl diphosphate + beta-D-GlcNAc-(1-&gt;4)-Mur2Ac(oyl-L-Ala-gamma-D-Glu-L-Lys-D-Ala-D-Ala)-di-trans,octa-cis-undecaprenyl diphosphate = [GlcNAc-(1-&gt;4)-Mur2Ac(oyl-L-Ala-gamma-D-Glu-L-Lys-D-Ala-D-Ala)](n+1)-di-trans,octa-cis-undecaprenyl diphosphate + di-trans,octa-cis-undecaprenyl diphosphate + H(+). Its pathway is cell wall biogenesis; peptidoglycan biosynthesis. Functionally, peptidoglycan polymerase that catalyzes glycan chain elongation from lipid-linked precursors. In Xylella fastidiosa (strain M12), this protein is Biosynthetic peptidoglycan transglycosylase.